The chain runs to 522 residues: Protein nucleotidyltransferase YdiU (522 aa).

ATP is bound by residues Gly109, Gly111, Arg112, Lys132, Asp144, Gly145, Arg195, and Arg202. Asp271 (proton acceptor) is an active-site residue. Mg(2+) contacts are provided by Asn272 and Asp281. An ATP-binding site is contributed by Asp281.

Belongs to the SELO family. It depends on Mg(2+) as a cofactor. Requires Mn(2+) as cofactor.

The catalysed reaction is L-seryl-[protein] + ATP = 3-O-(5'-adenylyl)-L-seryl-[protein] + diphosphate. It catalyses the reaction L-threonyl-[protein] + ATP = 3-O-(5'-adenylyl)-L-threonyl-[protein] + diphosphate. It carries out the reaction L-tyrosyl-[protein] + ATP = O-(5'-adenylyl)-L-tyrosyl-[protein] + diphosphate. The enzyme catalyses L-histidyl-[protein] + UTP = N(tele)-(5'-uridylyl)-L-histidyl-[protein] + diphosphate. The catalysed reaction is L-seryl-[protein] + UTP = O-(5'-uridylyl)-L-seryl-[protein] + diphosphate. It catalyses the reaction L-tyrosyl-[protein] + UTP = O-(5'-uridylyl)-L-tyrosyl-[protein] + diphosphate. Nucleotidyltransferase involved in the post-translational modification of proteins. It can catalyze the addition of adenosine monophosphate (AMP) or uridine monophosphate (UMP) to a protein, resulting in modifications known as AMPylation and UMPylation. The chain is Protein nucleotidyltransferase YdiU from Burkholderia ambifaria (strain ATCC BAA-244 / DSM 16087 / CCUG 44356 / LMG 19182 / AMMD) (Burkholderia cepacia (strain AMMD)).